We begin with the raw amino-acid sequence, 60 residues long: Pepsin-3 (60 aa).

The propeptide at 1-35 is activation peptide; the sequence is INVPLTRHKSMRESLREKGIELPYQDPAIKYRPEF.

It belongs to the peptidase A1 family.

The chain is Pepsin-3 from Thunnus orientalis (North Pacific bluefin tuna).